Consider the following 460-residue polypeptide: Nucleosome assembly protein 1-like 2 (460 aa).

Positions 1–11 (MAESVDHKELS) are enriched in basic and acidic residues. Disordered regions lie at residues 1–87 (MAES…DSDR) and 213–238 (DEEE…EDPK). Over residues 213–223 (DEEEEEEEDDS) the composition is skewed to acidic residues. The Nuclear localization signal motif lies at 346-352 (IKKKQRH).

Belongs to the nucleosome assembly protein (NAP) family. As to expression, brain, specifically expressed in neurons.

It is found in the nucleus. Acidic protein which may be involved in interactions with other proteins or DNA. This Mus musculus (Mouse) protein is Nucleosome assembly protein 1-like 2 (Nap1l2).